A 1005-amino-acid polypeptide reads, in one-letter code: MKFQRKYWGLLSTLGVSSAVALSACAAQARDVYVTSSASDLLKNNSVPMSMFNVSPTSSFFGSKYAGLTTYIATGSNKDDGVNVATQTQEKLVLELATSVKGYKKKDKATSSQKTSTNSSCTTTSSGTSTSGEDDWECIGEIKRQSSSNGQNNQQSKSITEEEKFQEISQKATRYEFAIDTGIKWVDNNGKPVKDASGNDVKLSSKDFERGFEAYILSSELRFNRNGYFIDLMGLDVKKTVGMTKKNGAQVQMKVASSDEKDGEEKTVKITDDAYNPEDYQSTDDSKFNVYLTSPFPFLLSMMSKEFFFPIPHTHPKVKAIKVGKDSPLVYNEKNGSKILDQTKTNFDGIYGGGVNAWRDTWSVGPYYVESFNQSQIVFKRNSEYDTHITPNLPKTREDNEKPIPTMINYFQPGATPEVFYSNYIAGGLSSAEVPYSQQEDARSRFAGTGDLRWVKVQKTAQSAQITYSSRPYVVEGETVKTNSNITETEAKFLYNSESEEALTIRAGINGLINWQNLAIILLPNSGDLNYSIVPFGIFKEKGKNGASVQQKAVSTTEGSDLMNDYYYKIEKEQRLGLIPQREGNYEKNKNVLESATVKINYYSSKATSGQAGAAASAAFAKNNNTSDNTQQNQTSSVEAKSVNVTKHSFVQALKKVGFSGSNPLHFNMKLGNSSLSANGVDYYNAVKQALTELGTADNGEKLIVPEIILGDAQGPTRNEWYIGLSSVLGFSSWSPDYDGVGTWLDAATQLNDQGGGDVITYSSGAHIVRTLLLAASQKDVHSKFTQKIDQQNTASTTSDVTVKKADSSQDSSKSNTEEEKWDDVTSADLFKDDPYVLKNFGDAKAQAAQRSTGSTTSGNGTQASLEFTKKALSLLKFLVDNGILDKEKVKEAIKDPNKYLGKRDKIENGTNKPSKNEDFIGYELKDIYKKAAQLNRFNSIWAEKDTDNAKFLITVVDSYFPVLPVPAAGLNETSPTLLKPWFQFRSAPSGNGTIRDYGFIPENK.

The signal sequence occupies residues 1–24 (MKFQRKYWGLLSTLGVSSAVALSA). Residue cysteine 25 is the site of N-palmitoyl cysteine attachment. Residue cysteine 25 is the site of S-diacylglycerol cysteine attachment. Disordered stretches follow at residues 105–165 (KKDK…EEKF) and 786–825 (TQKI…WDDV). Composition is skewed to low complexity over residues 110-131 (TSSQ…TSTS) and 145-156 (QSSSNGQNNQQS). Residues 786-801 (TQKIDQQNTASTTSDV) are compositionally biased toward polar residues.

The protein localises to the cell membrane. This is an uncharacterized protein from Mycoplasma pneumoniae (strain ATCC 29342 / M129 / Subtype 1) (Mycoplasmoides pneumoniae).